Here is a 994-residue protein sequence, read N- to C-terminus: Glycine dehydrogenase (decarboxylating) (994 aa).

The tract at residues 1–20 is disordered; the sequence is MTDHAENRCGLEGPRPFSSR. Lys716 bears the N6-(pyridoxal phosphate)lysine mark.

Belongs to the GcvP family. As to quaternary structure, the glycine cleavage system is composed of four proteins: P, T, L and H. It depends on pyridoxal 5'-phosphate as a cofactor.

It carries out the reaction N(6)-[(R)-lipoyl]-L-lysyl-[glycine-cleavage complex H protein] + glycine + H(+) = N(6)-[(R)-S(8)-aminomethyldihydrolipoyl]-L-lysyl-[glycine-cleavage complex H protein] + CO2. In terms of biological role, the glycine cleavage system catalyzes the degradation of glycine. The P protein binds the alpha-amino group of glycine through its pyridoxal phosphate cofactor; CO(2) is released and the remaining methylamine moiety is then transferred to the lipoamide cofactor of the H protein. The protein is Glycine dehydrogenase (decarboxylating) of Cutibacterium acnes (strain DSM 16379 / KPA171202) (Propionibacterium acnes).